Here is a 461-residue protein sequence, read N- to C-terminus: Argininosuccinate lyase (461 aa).

Belongs to the lyase 1 family. Argininosuccinate lyase subfamily.

The protein resides in the cytoplasm. The catalysed reaction is 2-(N(omega)-L-arginino)succinate = fumarate + L-arginine. It functions in the pathway amino-acid biosynthesis; L-arginine biosynthesis; L-arginine from L-ornithine and carbamoyl phosphate: step 3/3. This is Argininosuccinate lyase from Aeromonas salmonicida (strain A449).